A 319-amino-acid chain; its full sequence is MKSKELNLHTLYTQHSRESWAGFGGHLSIAVSEEEAKAVEGLNDYLSVEEVETIYIPLVRLLHLHVTSAARRNQHVNVFLKHPHSAKIPFIIGIAGSVAVGKSTTARILQKLLSRLPDRPKVSLVTTDGFLYPTAELKRKNLLSRKGFPESYDVKALLEFLNDIKSGKERVEAPVYSHLTYDREEGAVEVVEGADIVIIEGINVLQSPTLEDDREDPRIFVSDFFDFSIYVDAEESRIFTWYLERFRLLRETAFQDPASYFHKFKDLSDAEADTMAASIWESVNRPNLYENILPTKFRSDLILRKGDGHKVEEVLVRRV.

Residue Gly96–Ser103 participates in ATP binding.

Belongs to the prokaryotic pantothenate kinase family.

The protein resides in the cytoplasm. It catalyses the reaction (R)-pantothenate + ATP = (R)-4'-phosphopantothenate + ADP + H(+). The protein operates within cofactor biosynthesis; coenzyme A biosynthesis; CoA from (R)-pantothenate: step 1/5. This Bacillus velezensis (strain DSM 23117 / BGSC 10A6 / LMG 26770 / FZB42) (Bacillus amyloliquefaciens subsp. plantarum) protein is Pantothenate kinase.